We begin with the raw amino-acid sequence, 459 residues long: Friend virus susceptibility protein 1 (459 aa).

Positions 192 to 269 (EAELPTVLAS…LNSLAHSNRQ (78 aa)) are disordered. Residues 213–223 (SKERTQQDKAD) show a composition bias toward basic and acidic residues. Residues 226 to 238 (QIQSSTSLVTSEP) show a composition bias toward polar residues.

In terms of biological role, retroviral restriction factor that prevents infection by gammaretroviruses. Acts by interacting with the capsid protein ca after entry of the virus into the cell. This interaction presumably disrupt the capsid thereby inactivating the viral genome, making it unable to enter host nucleus and integrate into host genome. This is Friend virus susceptibility protein 1 (Fv1) from Mus musculus (Mouse).